The following is a 461-amino-acid chain: Probable tubulin polyglutamylase TTLL9 (461 aa).

The segment covering 1–10 has biased composition (polar residues); it reads MSRQKNQNSK. The disordered stretch occupies residues 1–20; that stretch reads MSRQKNQNSKGHGVSKGKER. The 381-residue stretch at 22–402 folds into the TTL domain; it reads QRTLIRFKTT…EARLTGKEKR (381 aa). ATP contacts are provided by residues Lys149 and 155–156; that span reads QG. A protein is bound at residue Gln155. The tract at residues 172-208 is disordered; sequence RKGTSGKKPTGVETQPARANMNPSGSHDTRSSDDQKD. Over residues 198-208 the composition is skewed to basic and acidic residues; that stretch reads HDTRSSDDQKD. Residues 218-221 and 231-233 each bind ATP; these read QRYV and KFD. Arg257 contacts L-glutamate. 276–277 provides a ligand contact to ATP; sequence TN. Position 294 (Lys294) interacts with L-glutamate. Asp348, Glu361, and Asn363 together coordinate Mg(2+). Lys379 is an L-glutamate binding site.

Belongs to the tubulin--tyrosine ligase family. Mg(2+) is required as a cofactor. Highly expressed in brain and testis. Expressed in heart, kidney and lung. In the brain, expressed in ependymal cilia, cortex, corpus callosum and striatum. In the testis, specifically expressed in the seminiferous tubules.

Its subcellular location is the cytoplasm. The protein localises to the cytoskeleton. The protein resides in the cilium basal body. It localises to the flagellum axoneme. It catalyses the reaction (L-glutamyl)(n)-gamma-L-glutamyl-L-glutamyl-[protein] + L-glutamate + ATP = (L-glutamyl)(n+1)-gamma-L-glutamyl-L-glutamyl-[protein] + ADP + phosphate + H(+). Probable tubulin polyglutamylase that generates side chains of glutamate on the gamma-carboxyl group of specific glutamate residues within the C-terminal tail of target proteins. Similar to TTLL1, may acquire enzymatic activity only in complex with other proteins as it is most likely lacking domains important for autonomous activity. Mediates tubulin polyglutamylation which induces establishment of microtubule heterogeneity in sperm flagella, thereby playing a role in normal motile flagella axoneme structure and sperm flagella beating pattern. This Mus musculus (Mouse) protein is Probable tubulin polyglutamylase TTLL9.